Consider the following 351-residue polypeptide: ATP-dependent 6-phosphofructokinase subunit gamma (351 aa).

Heterododecamer of 4 alpha, 4 beta and 4 gamma chains. The gamma chain bridges the N-terminal halves of the alpha and beta subunits.

It is found in the cytoplasm. It participates in carbohydrate degradation; glycolysis; D-glyceraldehyde 3-phosphate and glycerone phosphate from D-glucose: step 3/4. Functionally, structural subunit of pyrophosphate--fructose 6-phosphate 1-phosphotransferase. Not required for catalytic activity. Fine-tunes allosteric regulation of the ATP-PFK by ATP, fructose 2,6-bisphosphate and AMP. In Komagataella pastoris (Yeast), this protein is ATP-dependent 6-phosphofructokinase subunit gamma (PFK3).